Here is a 304-residue protein sequence, read N- to C-terminus: Acetylglutamate kinase (304 aa).

Residues 75-76 (GG), arginine 97, and asparagine 196 contribute to the substrate site.

The protein belongs to the acetylglutamate kinase family. ArgB subfamily.

The protein localises to the cytoplasm. The catalysed reaction is N-acetyl-L-glutamate + ATP = N-acetyl-L-glutamyl 5-phosphate + ADP. The protein operates within amino-acid biosynthesis; L-arginine biosynthesis; N(2)-acetyl-L-ornithine from L-glutamate: step 2/4. In terms of biological role, catalyzes the ATP-dependent phosphorylation of N-acetyl-L-glutamate. The polypeptide is Acetylglutamate kinase (Corynebacterium urealyticum (strain ATCC 43042 / DSM 7109)).